We begin with the raw amino-acid sequence, 704 residues long: Protein arginine N-methyltransferase 7 (704 aa).

SAM-dependent MTase PRMT-type domains are found at residues Glu14–Trp356 and Ser366–Glu704.

The protein belongs to the class I-like SAM-binding methyltransferase superfamily. Protein arginine N-methyltransferase family. PRMT7 subfamily.

In terms of biological role, essential arginine methyltransferase that can both catalyze the formation of omega-N monomethylarginine (MMA) and symmetrical dimethylarginine (sDMA). Specifically mediates the symmetrical dimethylation of arginine residues in the small nuclear ribonucleoproteins SmD1 and SmD3. This Drosophila grimshawi (Hawaiian fruit fly) protein is Protein arginine N-methyltransferase 7 (Art7).